Consider the following 108-residue polypeptide: Glutaredoxin-1 (108 aa).

The 104-residue stretch at 3 to 106 (EEFVQQRLTN…DILSSIGVLR (104 aa)) folds into the Glutaredoxin domain. Cysteine 23 and cysteine 26 form a disulfide bridge.

This sequence belongs to the glutaredoxin family.

Its subcellular location is the virion. In terms of biological role, displays thioltransferase and dehydroascorbate reductase activities. The chain is Glutaredoxin-1 (OPG075) from Variola virus (isolate Human/India/Ind3/1967) (VARV).